The following is a 306-amino-acid chain: MEHSRPYGGRKRMSLGNILGDPFALATISISLLAWFITFISCVIAQVQANKNKGLPDKDNPDGNFPPFAWWAVVYSLFLIVGVVIVVASDAIQTYHVAVTGYLAGGMVLVTSGVNSLVYSKNGAREAAAAGFILLSMVVIVWIFYFGSTPSSTPRAFLDSFALSKDSGAMHNQAMNGYGGTGRPETSNSVQPPQMYTSAQLNGFENPSPVGGASQAPTAPTMPTYGNNTMQPNNKSNDEEVLPPIDYPYQAKAIYSYEANPSDANEISFSKHEILDVSDVSGRWWQARRRGTNEIGIAPSNYLILL.

Over 1–23 the chain is Cytoplasmic; sequence MEHSRPYGGRKRMSLGNILGDPF. A helical transmembrane segment spans residues 24–44; it reads ALATISISLLAWFITFISCVI. The Extracellular portion of the chain corresponds to 45 to 67; sequence AQVQANKNKGLPDKDNPDGNFPP. Residues 68-88 form a helical membrane-spanning segment; that stretch reads FAWWAVVYSLFLIVGVVIVVA. Residues 89 to 96 are Cytoplasmic-facing; the sequence is SDAIQTYH. A helical membrane pass occupies residues 97 to 117; it reads VAVTGYLAGGMVLVTSGVNSL. Over 118 to 126 the chain is Extracellular; that stretch reads VYSKNGARE. The helical transmembrane segment at 127-147 threads the bilayer; sequence AAAAGFILLSMVVIVWIFYFG. Topologically, residues 148 to 306 are cytoplasmic; it reads STPSSTPRAF…IAPSNYLILL (159 aa). The disordered stretch occupies residues 204 to 242; it reads FENPSPVGGASQAPTAPTMPTYGNNTMQPNNKSNDEEVL. Over residues 224-235 the composition is skewed to polar residues; sequence TYGNNTMQPNNK. The SH3 domain maps to 246–306; the sequence is DYPYQAKAIY…IAPSNYLILL (61 aa).

Belongs to the SHO1 family. Forms homooligomers.

It localises to the cell membrane. In terms of biological role, plasma membrane osmosensor that activates the high osmolarity glycerol (HOG) MAPK signaling pathway in response to high osmolarity. Affects fungal virulence. The protein is High osmolarity signaling protein MOS1 (MOS1) of Metarhizium robertsii (strain ARSEF 23 / ATCC MYA-3075) (Metarhizium anisopliae (strain ARSEF 23)).